Here is a 156-residue protein sequence, read N- to C-terminus: Small ribosomal subunit protein uS7 (156 aa).

It belongs to the universal ribosomal protein uS7 family. In terms of assembly, part of the 30S ribosomal subunit. Contacts proteins S9 and S11.

Its function is as follows. One of the primary rRNA binding proteins, it binds directly to 16S rRNA where it nucleates assembly of the head domain of the 30S subunit. Is located at the subunit interface close to the decoding center, probably blocks exit of the E-site tRNA. This chain is Small ribosomal subunit protein uS7, found in Afipia carboxidovorans (strain ATCC 49405 / DSM 1227 / KCTC 32145 / OM5) (Oligotropha carboxidovorans).